We begin with the raw amino-acid sequence, 196 residues long: Peptide deformylase (196 aa).

Cys-105 and His-147 together coordinate Fe cation. Glu-148 is a catalytic residue. Position 151 (His-151) interacts with Fe cation.

Belongs to the polypeptide deformylase family. The cofactor is Fe(2+).

It catalyses the reaction N-terminal N-formyl-L-methionyl-[peptide] + H2O = N-terminal L-methionyl-[peptide] + formate. Functionally, removes the formyl group from the N-terminal Met of newly synthesized proteins. Requires at least a dipeptide for an efficient rate of reaction. N-terminal L-methionine is a prerequisite for activity but the enzyme has broad specificity at other positions. The chain is Peptide deformylase from Flavobacterium johnsoniae (strain ATCC 17061 / DSM 2064 / JCM 8514 / BCRC 14874 / CCUG 350202 / NBRC 14942 / NCIMB 11054 / UW101) (Cytophaga johnsonae).